A 62-amino-acid chain; its full sequence is Temporin-La (62 aa).

Positions 1 to 22 are cleaved as a signal peptide; that stretch reads MFPLKKSLLLLFFLGTINLSFC. Residues 23–47 constitute a propeptide that is removed on maturation; the sequence is EEERDVDQDERRDDPGERNVQVEKR. At Leu60 the chain carries Leucine amide.

The protein belongs to the frog skin active peptide (FSAP) family. Temporin subfamily. As to expression, expressed by the skin glands.

The protein resides in the secreted. Its subcellular location is the target cell membrane. Functionally, antimicrobial peptide with amphipathic alpha-helical structure that acts against both Gram-positive and Gram-negative bacteria and the fungus Candida albicans. Is active against S.aureus ATCC 25923 (MIC=2.5 ug/ml), S.suis 2 CVCC 606 (MIC=15.6 ug/ml), Salmonella ATCC 20020 (MIC=15.6 ug/ml), P.aeruginosa ATCC 227853 (MIC=60 ug/ml), and C.albicans ATCC10231 (MIC=31.25 ug/ml). Is not active against B.subtilis ADB403, E.coli ATCC 25922, and K.pneumoniae ATCC 700603. Also shows a strong antitumor activity, but no hemolytic activity. In Aquarana catesbeiana (American bullfrog), this protein is Temporin-La.